A 148-amino-acid chain; its full sequence is Probable transporter PD_1893 (148 aa).

4 helical membrane passes run 11–31, 48–68, 93–113, and 118–138; these read FTVALAAGLLFGFGLALSEMI, NPSLLFVLGSALAVAFPGMAL, IVFGSAIFGTGWGLTGLCPGP, and LSTGLGSVLLFVAAMAAGMII.

Belongs to the TsuA/YedE (TC 9.B.102) family.

Its subcellular location is the cell inner membrane. This Xylella fastidiosa (strain Temecula1 / ATCC 700964) protein is Probable transporter PD_1893.